Consider the following 640-residue polypeptide: MPTITLPDGSQRSFDHVVSVADVALSIGAGLAKATVAGKVDGKLVDACDLIENDASLQIITPKDQEGLEIIRHSCAHLVGHAVKQLYPTAKMVIGPVIDDGFYYDIAYERPFTPDDMAAIEQRMQQLIEKDYDVIKKVTPRAEVIEVFTARHEDYKLRLVEDMPNEQAMGLYYHEEYVDMCRGPHVPNTRFLKSFKLTKLSGAYWRGDAKNEQLQRVYGTAWADKKQLAAYIQRIEEAEKRDHRKIGKRLGLFHTQEEAPGMVFWHPQGWTLYQVLEQYMRKVQRENGYLEIKTPQVVDRSLWEKSGHWANYADNMFTTESESRDYAIKPMNCPCHVQVFNQGLKSYRELPMRLAEFGACHRNEPSGALHGIMRVRGFTQDDAHIFCTEDQMQAESAAFIKLTLDVYADFGFKDIELKLSTRPEKRVGSDELWERAETALASALDSAGLPYDLQPGEGAFYGPKIEFSLKDCLGRVWQCGTLQLDFNLPIRLSAEYVSEDNSRKNPVMLHRAILGSFERFIGILIEHYEGAFPAWLAPTQAVIMNITDKQADFALEVEKTLAESGFRAKSDLRNEKIGFKIREHTLLKVPYLLVIGDREVEMQTVAVRTREGADLGSMPVAQFAEFLAQAVSRRGRQDTE.

A TGS domain is found at 1–61 (MPTITLPDGS…ENDASLQIIT (61 aa)). The tract at residues 242–533 (DHRKIGKRLG…LIEHYEGAFP (292 aa)) is catalytic. Positions 333, 384, and 510 each coordinate Zn(2+).

This sequence belongs to the class-II aminoacyl-tRNA synthetase family. As to quaternary structure, homodimer. Zn(2+) serves as cofactor.

The protein resides in the cytoplasm. It carries out the reaction tRNA(Thr) + L-threonine + ATP = L-threonyl-tRNA(Thr) + AMP + diphosphate + H(+). Catalyzes the attachment of threonine to tRNA(Thr) in a two-step reaction: L-threonine is first activated by ATP to form Thr-AMP and then transferred to the acceptor end of tRNA(Thr). Also edits incorrectly charged L-seryl-tRNA(Thr). In Pseudomonas savastanoi pv. phaseolicola (strain 1448A / Race 6) (Pseudomonas syringae pv. phaseolicola (strain 1448A / Race 6)), this protein is Threonine--tRNA ligase.